Here is a 527-residue protein sequence, read N- to C-terminus: Pyruvate kinase 1, cytosolic (527 aa).

R58 lines the substrate pocket. Residues D60, S62, D92, and T93 each coordinate K(+). Residue 60–63 coordinates ATP; it reads DFSW. K256 is a binding site for substrate. Mg(2+) is bound at residue E258. The substrate site is built by G281, N282, and T313. N282 provides a ligand contact to Mg(2+).

The protein belongs to the pyruvate kinase family. In terms of assembly, homotetramer. It depends on Mg(2+) as a cofactor. The cofactor is K(+).

It localises to the cytoplasm. The protein resides in the cytosol. The enzyme catalyses pyruvate + ATP = phosphoenolpyruvate + ADP + H(+). Its pathway is carbohydrate degradation; glycolysis; pyruvate from D-glyceraldehyde 3-phosphate: step 5/5. Its function is as follows. Key regulatory enzyme of the glycolytic pathway that catalyzes the final step of glycolysis, converting ADP and phosphoenolpyruvate (PEP) to ATP and pyruvate by essentially irreversible transphosphorylation. Is critical for plant growth and development. In Oryza sativa subsp. indica (Rice), this protein is Pyruvate kinase 1, cytosolic.